Reading from the N-terminus, the 938-residue chain is Isoleucine--tRNA ligase (938 aa).

The 'HIGH' region motif lies at 58-68 (PYANGSIHIGH). N6-acetyllysine is present on K183. E561 lines the L-isoleucyl-5'-AMP pocket. The 'KMSKS' region signature appears at 602-606 (KMSKS). K605 contacts ATP. Residues C901, C904, C921, and C924 each contribute to the Zn(2+) site.

This sequence belongs to the class-I aminoacyl-tRNA synthetase family. IleS type 1 subfamily. Monomer. Requires Zn(2+) as cofactor.

It is found in the cytoplasm. It carries out the reaction tRNA(Ile) + L-isoleucine + ATP = L-isoleucyl-tRNA(Ile) + AMP + diphosphate. Its function is as follows. Catalyzes the attachment of isoleucine to tRNA(Ile). As IleRS can inadvertently accommodate and process structurally similar amino acids such as valine, to avoid such errors it has two additional distinct tRNA(Ile)-dependent editing activities. One activity is designated as 'pretransfer' editing and involves the hydrolysis of activated Val-AMP. The other activity is designated 'posttransfer' editing and involves deacylation of mischarged Val-tRNA(Ile). The chain is Isoleucine--tRNA ligase from Escherichia coli O6:H1 (strain CFT073 / ATCC 700928 / UPEC).